The chain runs to 309 residues: Ribonuclease Z (309 aa).

Zn(2+)-binding residues include His-63, His-65, Asp-67, His-68, His-141, Asp-212, and His-270. The Proton acceptor role is filled by Asp-67.

This sequence belongs to the RNase Z family. As to quaternary structure, homodimer. Zn(2+) serves as cofactor.

It carries out the reaction Endonucleolytic cleavage of RNA, removing extra 3' nucleotides from tRNA precursor, generating 3' termini of tRNAs. A 3'-hydroxy group is left at the tRNA terminus and a 5'-phosphoryl group is left at the trailer molecule.. Functionally, zinc phosphodiesterase, which displays some tRNA 3'-processing endonuclease activity. Probably involved in tRNA maturation, by removing a 3'-trailer from precursor tRNA. In Halalkalibacterium halodurans (strain ATCC BAA-125 / DSM 18197 / FERM 7344 / JCM 9153 / C-125) (Bacillus halodurans), this protein is Ribonuclease Z.